The following is a 513-amino-acid chain: MGHSVAGVCLEEPAVLTAFPSLLHPQDPPQQRDRILFVTAELSDFVKVGGLGDFSAALPRVLKREHSVRVLLPGYRQVLERCRDLRIIGSLPGRAAIPPCEIGLVTLDDGLEVMLVLCPLLYEREGTPYMDDQGNDWPDNHLRFARLCLAAAEIAGGRGAQGWQPGLVHANDWPSALTPAYMAWNGVRTPSLFTIHNLAYQGLCDLQCSAELGLPDEALSHESMEFHGRLSFLKAGIAHAHHITTVSETYAQEITTPEYGCGLHGILKYKVEKRQLSGIVNGIDDSWQPHCDPHLVACFSARQWAGKRANTRYVEERFGLEPGKGPLFAVVSRLVQQKGIDLTLEISDALLQAGGRLVSIGRGEPNLEKAMLELARRHPGQVGVHIGFDETEARRIYAGSDFLLMPSRYEPCGLSQLYAQCFGSLPIARCTGGLADTIVDGVTGFLFREETAQSYLDAVMRAINVYHCPSLLNAMRCKAMAAPMFWSDSVEPYNRLYRRLLRNTAPALRGVRQ.

K47 provides a ligand contact to ADP-alpha-D-glucose.

Belongs to the glycosyltransferase 1 family. Bacterial/plant glycogen synthase subfamily.

It catalyses the reaction [(1-&gt;4)-alpha-D-glucosyl](n) + ADP-alpha-D-glucose = [(1-&gt;4)-alpha-D-glucosyl](n+1) + ADP + H(+). It functions in the pathway glycan biosynthesis; glycogen biosynthesis. Synthesizes alpha-1,4-glucan chains using ADP-glucose. The protein is Glycogen synthase of Pseudomonas aeruginosa (strain ATCC 15692 / DSM 22644 / CIP 104116 / JCM 14847 / LMG 12228 / 1C / PRS 101 / PAO1).